The sequence spans 293 residues: Nucleotide-binding protein cauri_1197 (293 aa).

Residue 16-23 participates in ATP binding; that stretch reads GMSGGGLT. 67-70 contacts GTP; sequence DVRS.

This sequence belongs to the RapZ-like family.

Functionally, displays ATPase and GTPase activities. The polypeptide is Nucleotide-binding protein cauri_1197 (Corynebacterium aurimucosum (strain ATCC 700975 / DSM 44827 / CIP 107346 / CN-1) (Corynebacterium nigricans)).